Consider the following 1013-residue polypeptide: Tolloid-like protein 1 (1013 aa).

The N-terminal stretch at 1–30 (MGLGTLSPRMLVWLVASGIVFYGELWVCAG) is a signal peptide. Positions 31–147 (LDYDYTFDGN…GQNEKNRVPR (117 aa)) are excised as a propeptide. The Peptidase M12A domain maps to 148–347 (AATSRTERIW…AQARKLYRCP (200 aa)). N-linked (GlcNAc...) asparagine glycosylation is present at Asn-169. Cystine bridges form between Cys-190–Cys-346, Cys-210–Cys-232, Cys-212–Cys-213, and Cys-349–Cys-375. His-240 lines the Zn(2+) pocket. Residue Glu-241 is part of the active site. His-244 and His-250 together coordinate Zn(2+). CUB domains lie at 349–461 (CGET…YEAI) and 462–574 (CGGE…FFKE). 2 N-linked (GlcNAc...) asparagine glycosylation sites follow: Asn-359 and Asn-390. Intrachain disulfides connect Cys-402-Cys-424, Cys-462-Cys-488, Cys-515-Cys-537, Cys-578-Cys-590, Cys-586-Cys-599, Cys-601-Cys-614, Cys-618-Cys-644, Cys-671-Cys-693, Cys-734-Cys-745, Cys-741-Cys-754, Cys-756-Cys-769, Cys-774-Cys-800, Cys-827-Cys-849, Cys-887-Cys-917, and Cys-944-Cys-966. The 42-residue stretch at 574–615 (EEDECAKPDRGGCEQRCLNTLGSYQCACEPGYELGPDRRSCE) folds into the EGF-like 1; calcium-binding domain. In terms of domain architecture, CUB 3 spans 618 to 730 (CGGLLTKLNG…KGFKAHFFSD (113 aa)). An N-linked (GlcNAc...) asparagine glycan is attached at Asn-626. Positions 730–770 (DKDECSKDNGGCQHECVNTMGSYMCQCRNGFVLHDNKHDCK) constitute an EGF-like 2; calcium-binding domain. 2 consecutive CUB domains span residues 774–886 (CEQK…HSTE) and 887–1003 (CGGR…YKSI).

Zn(2+) serves as cofactor.

The protein localises to the secreted. Protease which processes procollagen C-propeptides, such as chordin, pro-biglycan and pro-lysyl oxidase. Required for the embryonic development. Predominant protease, which in the development, influences dorsal-ventral patterning and skeletogenesis. In Homo sapiens (Human), this protein is Tolloid-like protein 1 (TLL1).